Here is a 250-residue protein sequence, read N- to C-terminus: Triosephosphate isomerase (250 aa).

A substrate-binding site is contributed by 9–11 (NWK). H100 (electrophile) is an active-site residue. Catalysis depends on E169, which acts as the Proton acceptor. Substrate contacts are provided by residues G175, S208, and 229-230 (GG).

The protein belongs to the triosephosphate isomerase family. In terms of assembly, homodimer.

The protein resides in the cytoplasm. The catalysed reaction is D-glyceraldehyde 3-phosphate = dihydroxyacetone phosphate. It participates in carbohydrate biosynthesis; gluconeogenesis. The protein operates within carbohydrate degradation; glycolysis; D-glyceraldehyde 3-phosphate from glycerone phosphate: step 1/1. Functionally, involved in the gluconeogenesis. Catalyzes stereospecifically the conversion of dihydroxyacetone phosphate (DHAP) to D-glyceraldehyde-3-phosphate (G3P). In Synechococcus sp. (strain JA-2-3B'a(2-13)) (Cyanobacteria bacterium Yellowstone B-Prime), this protein is Triosephosphate isomerase.